Reading from the N-terminus, the 287-residue chain is Merozoite surface protein 2 (287 aa).

A signal peptide spans 1–20; that stretch reads MKVIKTLSIINFFIFVTFNI. N-linked (GlcNAc...) asparagine glycosylation is found at asparagine 22 and asparagine 36. The tract at residues 42–248 is disordered; that stretch reads SMTESNPPTG…DSQKECTDGN (207 aa). The interval 44 to 213 is polymorphic region; it reads TESNPPTGAS…EQTESPELQS (170 aa). The segment covering 54–112 has biased composition (gly residues); sequence GSAGGSAGGSAGGSAGGSAGGSAGGSAGGSAGGSAGGSAGGSAGGSAGGSAGSGDGNGA. 12 tandem repeats follow at residues 55-58, 59-62, 63-66, 67-70, 71-74, 75-78, 79-82, 83-86, 87-90, 91-94, 95-98, and 99-102. Residues 55–102 form a 12 X 4 AA tandem repeats of S-A-G-G region; the sequence is SAGGSAGGSAGGSAGGSAGGSAGGSAGGSAGGSAGGSAGGSAGGSAGG. Positions 121–149 are enriched in low complexity; sequence SPSTPATTTTTTTTNDAEASTSTSSENPN. Composition is skewed to polar residues over residues 150–180 and 187–215; these read HNNAETNQANKETQNNSNVQQDSQTKSNVPP and KSPTAQPEQAENSAPTAEQTESPELQSAP. Asparagine 164 is a glycosylation site (N-linked (GlcNAc...) asparagine). N-linked (GlcNAc...) asparagine glycosylation occurs at asparagine 236. Cysteine 244 and cysteine 252 are disulfide-bonded. N-linked (GlcNAc...) asparagine glycosylation is found at asparagine 260 and asparagine 261. Residue asparagine 261 is the site of GPI-anchor amidated asparagine attachment. A propeptide spans 262–287 (removed in mature form); that stretch reads SSNIASINKFVVLISATLVLSFAIFI.

The protein resides in the cell membrane. May play a role in the merozoite attachment to the erythrocyte. This Plasmodium falciparum (isolate FCR-3 / Gambia) protein is Merozoite surface protein 2.